A 1876-amino-acid polypeptide reads, in one-letter code: 1,3-beta-glucan synthase component FKS1 (1876 aa).

Composition is skewed to polar residues over residues Met-1–Glu-25 and Gln-60–Thr-71. The tract at residues Met-1–Gly-108 is disordered. The Cytoplasmic portion of the chain corresponds to Met-1–Arg-454. A Glycyl lysine isopeptide (Lys-Gly) (interchain with G-Cter in ubiquitin) cross-link involves residue Lys-259. 2 positions are modified to phosphothreonine: Thr-269 and Thr-272. Glycyl lysine isopeptide (Lys-Gly) (interchain with G-Cter in ubiquitin) cross-links involve residues Lys-275 and Lys-386. A helical membrane pass occupies residues Ile-455–Tyr-475. At Thr-476–Lys-492 the chain is on the extracellular side. A helical transmembrane segment spans residues Trp-493–Cys-513. Residues Glu-514–Arg-531 are Cytoplasmic-facing. Residues Phe-532–Tyr-552 form a helical membrane-spanning segment. Over Asp-553 to His-563 the chain is Extracellular. The chain crosses the membrane as a helical span at residues Val-564–Pro-584. Residues Leu-585–Ser-621 are Cytoplasmic-facing. A helical transmembrane segment spans residues Tyr-622–Leu-642. The Extracellular segment spans residues Ser-643–Gly-678. The chain crosses the membrane as a helical span at residues Leu-679–Val-699. Residues Asn-700–Tyr-1358 lie on the Cytoplasmic side of the membrane. Residues Lys-910 and Lys-915 each participate in a glycyl lysine isopeptide (Lys-Gly) (interchain with G-Cter in ubiquitin) cross-link. A helical membrane pass occupies residues Thr-1359–Ile-1379. Residues Glu-1380–Arg-1444 are Extracellular-facing. The chain crosses the membrane as a helical span at residues Phe-1445 to Val-1465. The Cytoplasmic portion of the chain corresponds to Ala-1466 to Gln-1469. Residues Ala-1470 to Asn-1490 traverse the membrane as a helical segment. Over Pro-1491–Leu-1560 the chain is Extracellular. Glycyl lysine isopeptide (Lys-Gly) (interchain with G-Cter in ubiquitin) cross-links involve residues Lys-1539 and Lys-1547. Residues Ile-1561–Phe-1581 traverse the membrane as a helical segment. At Ile-1582–Arg-1601 the chain is on the cytoplasmic side. The helical transmembrane segment at Ile-1602–Gly-1622 threads the bilayer. The Extracellular portion of the chain corresponds to Met-1623–Ala-1643. A helical membrane pass occupies residues Gly-1644–Leu-1664. At Glu-1665–Met-1672 the chain is on the cytoplasmic side. Residues Leu-1673–Leu-1695 traverse the membrane as a helical segment. Topologically, residues Thr-1696 to Ser-1802 are extracellular. Residues Leu-1803 to Ala-1823 traverse the membrane as a helical segment. Residues Lys-1824–Lys-1876 lie on the Cytoplasmic side of the membrane.

This sequence belongs to the glycosyltransferase 48 family. In terms of assembly, component of the 1,3-beta-glucan synthase (GS) complex, composed of two alternate catalytic subunits FKS1 or GSC2, and a regulatory subunit RHO1. Interacts with RHO1, which is a GTP-binding protein.

The protein localises to the mitochondrion. Its subcellular location is the cell membrane. The enzyme catalyses [(1-&gt;3)-beta-D-glucosyl](n) + UDP-alpha-D-glucose = [(1-&gt;3)-beta-D-glucosyl](n+1) + UDP + H(+). In terms of biological role, alternate catalytic subunit of the 1,3-beta-glucan synthase (GS) complex. Synthesizes 1,3-beta-glucan, a major structural component of the yeast cell wall. Involved in cell wall synthesis, maintenance and remodeling. The chain is 1,3-beta-glucan synthase component FKS1 (FKS1) from Saccharomyces cerevisiae (strain ATCC 204508 / S288c) (Baker's yeast).